Consider the following 512-residue polypeptide: GMP synthase [glutamine-hydrolyzing] (512 aa).

One can recognise a Glutamine amidotransferase type-1 domain in the interval Thr-7–Asp-197. Cys-84 functions as the Nucleophile in the catalytic mechanism. Catalysis depends on residues His-171 and Glu-173. One can recognise a GMPS ATP-PPase domain in the interval Trp-198–Arg-387. Ser-225–Ala-231 is a binding site for ATP.

In terms of assembly, homodimer.

The enzyme catalyses XMP + L-glutamine + ATP + H2O = GMP + L-glutamate + AMP + diphosphate + 2 H(+). It functions in the pathway purine metabolism; GMP biosynthesis; GMP from XMP (L-Gln route): step 1/1. Functionally, catalyzes the synthesis of GMP from XMP. In Caldanaerobacter subterraneus subsp. tengcongensis (strain DSM 15242 / JCM 11007 / NBRC 100824 / MB4) (Thermoanaerobacter tengcongensis), this protein is GMP synthase [glutamine-hydrolyzing].